We begin with the raw amino-acid sequence, 332 residues long: UBA domain-containing protein Mud1 (332 aa).

Residue Asp127 is part of the active site. A disordered region spans residues 246-298; sequence GLGIEPASKASASSPNPQSGTRLGTKESVAPNNEGSSNPPSLVNPPTDPGLNS. Over residues 251 to 264 the composition is skewed to low complexity; sequence PASKASASSPNPQS. Residues 275 to 286 are compositionally biased toward polar residues; that stretch reads APNNEGSSNPPS. The UBA domain maps to 291–332; that stretch reads PTDPGLNSKIAQLVSMGFDPLEAAQALDAANGDLDVAASFLL.

This sequence belongs to the DDI1 family. In terms of assembly, homodimer. Interacts (via UBA domain) with polyubiquitin (polyUb) chains (via Lys-48-linked polyUbs). Has weak binding affinity for monoubiquitin. According to another report, has no affinity for monoubiquitin.

The protein localises to the cytoplasm. It is found in the cell membrane. Recognizes and binds polyubiquitin chains. Acts as a linker between the 19S proteasome and polyubiquitinated proteins via UBA domain interactions with ubiquitin for their subsequent degradation. Aspartic protease. Appears to act as negative regulator of constitutive exocytosis. May act at the level of secretory vesicle docking and fusion as a competitive inhibitor of SNARE assembly. Required for S-phase checkpoint control. The sequence is that of UBA domain-containing protein Mud1 from Schizosaccharomyces pombe (strain 972 / ATCC 24843) (Fission yeast).